Consider the following 399-residue polypeptide: uncharacterized protein (399 aa).

The disordered stretch occupies residues 375–399 (AAGGHRGSHGKSEQAATVRVVDDRR).

Belongs to the mycobacterial PPE family.

This is an uncharacterized protein from Mycobacterium tuberculosis (strain CDC 1551 / Oshkosh).